Here is a 332-residue protein sequence, read N- to C-terminus: L-lactate dehydrogenase A chain (332 aa).

NAD(+) is bound by residues 29 to 57 (GMVGMASAVSILLKDLCDELALVDVMEDK) and Arg99. Substrate contacts are provided by Arg106, Asn138, and Arg169. Asn138 serves as a coordination point for NAD(+). Residue His193 is the Proton acceptor of the active site. Residue Thr248 participates in substrate binding.

It belongs to the LDH/MDH superfamily. LDH family. Homotetramer.

Its subcellular location is the cytoplasm. The catalysed reaction is (S)-lactate + NAD(+) = pyruvate + NADH + H(+). It functions in the pathway fermentation; pyruvate fermentation to lactate; (S)-lactate from pyruvate: step 1/1. Its function is as follows. Interconverts simultaneously and stereospecifically pyruvate and lactate with concomitant interconversion of NADH and NAD(+). This is L-lactate dehydrogenase A chain (ldha) from Sphyraena argentea (Pacific barracuda).